The chain runs to 280 residues: 23S rRNA (guanine(748)-N(1))-methyltransferase (280 aa).

The Zn(2+) site is built by cysteine 11, cysteine 14, cysteine 27, and histidine 31. S-adenosyl-L-methionine is bound by residues tyrosine 70, threonine 100 to glycine 101, and histidine 188.

This sequence belongs to the methyltransferase superfamily. RlmA family.

It carries out the reaction guanosine(748) in 23S rRNA + S-adenosyl-L-methionine = N(1)-methylguanosine(748) in 23S rRNA + S-adenosyl-L-homocysteine + H(+). Functionally, specifically methylates the guanosine in position 748 of 23S rRNA. Confers resistance to the macrolide antibiotic tylosine. The sequence is that of 23S rRNA (guanine(748)-N(1))-methyltransferase (rlmAII) from Streptomyces fradiae (Streptomyces roseoflavus).